A 1340-amino-acid polypeptide reads, in one-letter code: Serine/threonine-protein phosphatase 7 long form homolog (1340 aa).

Mn(2+)-binding residues include Asp660 and His662. His722 acts as the Proton donor in catalysis. His773 is a binding site for Mn(2+). 4 disordered regions span residues 788–814, 1012–1093, 1196–1218, and 1266–1340; these read QERN…DRSE, KSMD…SRTR, TDGA…SEDI, and FTNL…DMDS. Residues 790 to 799 show a composition bias toward basic residues; the sequence is RNRKRKRTQK. A compositionally biased stretch (acidic residues) spans 1018–1027; it reads EQMEVDEKDD. The segment covering 1049-1080 has biased composition (basic and acidic residues); the sequence is GDRDMVDFSDKTENGSKEADHSETAEISKDLS. Residues 1203–1213 are compositionally biased toward polar residues; sequence EPSTSKLNYSE. Composition is skewed to basic and acidic residues over residues 1266–1289 and 1318–1328; these read FTNL…ERVI and DSVDSKNKGSL.

Belongs to the PPP phosphatase family. PP-7 subfamily. It depends on Mn(2+) as a cofactor. Expressed in root tips, the shoot apical meristem (SAM), leaf vasculature, hydathodes and mature flowers.

The protein resides in the nucleus. The enzyme catalyses O-phospho-L-seryl-[protein] + H2O = L-seryl-[protein] + phosphate. It carries out the reaction O-phospho-L-threonyl-[protein] + H2O = L-threonyl-[protein] + phosphate. Maybe required to maintain cell division activity in meristematic cells. The sequence is that of Serine/threonine-protein phosphatase 7 long form homolog from Arabidopsis thaliana (Mouse-ear cress).